Consider the following 687-residue polypeptide: Glycine--tRNA ligase beta subunit (687 aa).

This sequence belongs to the class-II aminoacyl-tRNA synthetase family. In terms of assembly, tetramer of two alpha and two beta subunits.

Its subcellular location is the cytoplasm. The enzyme catalyses tRNA(Gly) + glycine + ATP = glycyl-tRNA(Gly) + AMP + diphosphate. The chain is Glycine--tRNA ligase beta subunit from Neisseria meningitidis serogroup B (strain ATCC BAA-335 / MC58).